The following is a 354-amino-acid chain: Methylthioribose-1-phosphate isomerase (354 aa).

Residues 58–60 (RGA), arginine 101, and glutamine 204 contribute to the substrate site. Catalysis depends on aspartate 245, which acts as the Proton donor. 255–256 (NK) contributes to the substrate binding site.

The protein belongs to the eIF-2B alpha/beta/delta subunits family. MtnA subfamily.

The catalysed reaction is 5-(methylsulfanyl)-alpha-D-ribose 1-phosphate = 5-(methylsulfanyl)-D-ribulose 1-phosphate. The protein operates within amino-acid biosynthesis; L-methionine biosynthesis via salvage pathway; L-methionine from S-methyl-5-thio-alpha-D-ribose 1-phosphate: step 1/6. Its function is as follows. Catalyzes the interconversion of methylthioribose-1-phosphate (MTR-1-P) into methylthioribulose-1-phosphate (MTRu-1-P). In Xylella fastidiosa (strain M12), this protein is Methylthioribose-1-phosphate isomerase.